A 69-amino-acid chain; its full sequence is uncharacterized protein (69 aa).

This is an uncharacterized protein from Lepidoptera (butterflies and moths).